A 150-amino-acid polypeptide reads, in one-letter code: Deoxyuridine 5'-triphosphate nucleotidohydrolase (150 aa).

Residues 70 to 72 (RSG), N83, and 87 to 89 (TID) each bind substrate.

The protein belongs to the dUTPase family. It depends on Mg(2+) as a cofactor.

It carries out the reaction dUTP + H2O = dUMP + diphosphate + H(+). It functions in the pathway pyrimidine metabolism; dUMP biosynthesis; dUMP from dCTP (dUTP route): step 2/2. Its function is as follows. This enzyme is involved in nucleotide metabolism: it produces dUMP, the immediate precursor of thymidine nucleotides and it decreases the intracellular concentration of dUTP so that uracil cannot be incorporated into DNA. This chain is Deoxyuridine 5'-triphosphate nucleotidohydrolase, found in Desulfotalea psychrophila (strain LSv54 / DSM 12343).